The following is a 398-amino-acid chain: Enolase (398 aa).

Q154 provides a ligand contact to (2R)-2-phosphoglycerate. E196 serves as the catalytic Proton donor. Mg(2+) contacts are provided by D232, E273, and D300. Residues K325, R354, S355, and K376 each contribute to the (2R)-2-phosphoglycerate site. K325 functions as the Proton acceptor in the catalytic mechanism.

Belongs to the enolase family. It depends on Mg(2+) as a cofactor.

It localises to the cytoplasm. The protein resides in the secreted. Its subcellular location is the cell surface. It catalyses the reaction (2R)-2-phosphoglycerate = phosphoenolpyruvate + H2O. The protein operates within carbohydrate degradation; glycolysis; pyruvate from D-glyceraldehyde 3-phosphate: step 4/5. In terms of biological role, catalyzes the reversible conversion of 2-phosphoglycerate (2-PG) into phosphoenolpyruvate (PEP). It is essential for the degradation of carbohydrates via glycolysis. The polypeptide is Enolase (Natronomonas pharaonis (strain ATCC 35678 / DSM 2160 / CIP 103997 / JCM 8858 / NBRC 14720 / NCIMB 2260 / Gabara) (Halobacterium pharaonis)).